A 202-amino-acid polypeptide reads, in one-letter code: MTRVLVLYYSSYGHIETMAGAVAEGARSTGAEVTIKRVPETVPIEVADKAHFKLNQAAPVATVAELADYDAIIVGTGTRFGRMSSQMAVFLDQAGGLWARGALNGKVGGAFVSTGTQHGGQETTLFSIITNLMHFGMVIVGLPYSHQGQMSVDEIVGGAPYGATTVAGGDGSRQPSQIDLAGAFHQGEIVARTAAALVAARN.

A Flavodoxin-like domain is found at 4 to 190; that stretch reads VLVLYYSSYG…AGAFHQGEIV (187 aa). FMN-binding positions include 10-15 and 78-80; these read SSYGHI and TRF. Tyrosine 12 contributes to the NAD(+) binding site. Tryptophan 98 provides a ligand contact to substrate. FMN is bound by residues 113–119 and histidine 134; that span reads STGTQHG.

Belongs to the WrbA family. FMN is required as a cofactor.

It catalyses the reaction a quinone + NADH + H(+) = a quinol + NAD(+). The enzyme catalyses a quinone + NADPH + H(+) = a quinol + NADP(+). This is NAD(P)H dehydrogenase (quinone) 2 from Rhizobium meliloti (strain 1021) (Ensifer meliloti).